The sequence spans 447 residues: Large ribosomal subunit protein bL27m (447 aa).

Basic and acidic residues-rich tracts occupy residues 377–402 (QREA…KAEK) and 409–447 (KVEK…EKKD). The segment at 377–447 (QREAKKAREG…KKDSKTEKKD (71 aa)) is disordered.

It belongs to the bacterial ribosomal protein bL27 family. Component of the mitochondrial large ribosomal subunit (mt-LSU). Mature N.crassa 74S mitochondrial ribosomes consist of a small (37S) and a large (54S) subunit. The 37S small subunit contains a 16S ribosomal RNA (16S mt-rRNA) and 32 different proteins. The 54S large subunit contains a 23S rRNA (23S mt-rRNA) and 42 different proteins.

The protein resides in the mitochondrion. Functionally, component of the mitochondrial ribosome (mitoribosome), a dedicated translation machinery responsible for the synthesis of mitochondrial genome-encoded proteins, including at least some of the essential transmembrane subunits of the mitochondrial respiratory chain. The mitoribosomes are attached to the mitochondrial inner membrane and translation products are cotranslationally integrated into the membrane. This Neurospora crassa (strain ATCC 24698 / 74-OR23-1A / CBS 708.71 / DSM 1257 / FGSC 987) protein is Large ribosomal subunit protein bL27m (mrp7).